Consider the following 477-residue polypeptide: Ribosomal RNA small subunit methyltransferase F (477 aa).

S-adenosyl-L-methionine-binding positions include 125–131, E149, D176, and D194; that span reads AAAPGSK. C247 functions as the Nucleophile in the catalytic mechanism.

It belongs to the class I-like SAM-binding methyltransferase superfamily. RsmB/NOP family.

It localises to the cytoplasm. It catalyses the reaction cytidine(1407) in 16S rRNA + S-adenosyl-L-methionine = 5-methylcytidine(1407) in 16S rRNA + S-adenosyl-L-homocysteine + H(+). In terms of biological role, specifically methylates the cytosine at position 1407 (m5C1407) of 16S rRNA. The chain is Ribosomal RNA small subunit methyltransferase F from Klebsiella pneumoniae (strain 342).